We begin with the raw amino-acid sequence, 121 residues long: Large ribosomal subunit protein uL18 (121 aa).

The protein belongs to the universal ribosomal protein uL18 family. Part of the 50S ribosomal subunit; part of the 5S rRNA/L5/L18/L25 subcomplex. Contacts the 5S and 23S rRNAs.

Its function is as follows. This is one of the proteins that bind and probably mediate the attachment of the 5S RNA into the large ribosomal subunit, where it forms part of the central protuberance. This chain is Large ribosomal subunit protein uL18, found in Delftia acidovorans (strain DSM 14801 / SPH-1).